Reading from the N-terminus, the 703-residue chain is Polyribonucleotide nucleotidyltransferase (703 aa).

Mg(2+)-binding residues include aspartate 485 and aspartate 491. Residues 552–611 (PRIYTLKIDQDKIRDVIGKGGAMIRSITEASDTNIEIEDDGTIKIFATERAKADIAISKI) enclose the KH domain. Residues 621–689 (GKTYEGKVTR…RQNRVRLSIK (69 aa)) enclose the S1 motif domain.

This sequence belongs to the polyribonucleotide nucleotidyltransferase family. As to quaternary structure, component of the RNA degradosome, which is a multiprotein complex involved in RNA processing and mRNA degradation. Mg(2+) serves as cofactor.

It is found in the cytoplasm. The enzyme catalyses RNA(n+1) + phosphate = RNA(n) + a ribonucleoside 5'-diphosphate. Its function is as follows. Involved in mRNA degradation. Catalyzes the phosphorolysis of single-stranded polyribonucleotides processively in the 3'- to 5'-direction. This Pseudoalteromonas atlantica (strain T6c / ATCC BAA-1087) protein is Polyribonucleotide nucleotidyltransferase.